Here is a 121-residue protein sequence, read N- to C-terminus: Holo-[acyl-carrier-protein] synthase (121 aa).

The Mg(2+) site is built by aspartate 8 and glutamate 58.

It belongs to the P-Pant transferase superfamily. AcpS family. In terms of assembly, homotrimer. The cofactor is Mg(2+).

The protein resides in the cytoplasm. The enzyme catalyses apo-[ACP] + CoA = holo-[ACP] + adenosine 3',5'-bisphosphate + H(+). Transfers the 4'-phosphopantetheine moiety from coenzyme A to a Ser of fatty acid acyl-carrier-protein ACP. Also modifies the D-alanyl carrier protein but fails to recognize PCP and AcpK, an acyl carrier protein of secondary metabolism. This chain is Holo-[acyl-carrier-protein] synthase, found in Bacillus subtilis (strain 168).